A 367-amino-acid chain; its full sequence is Peptide chain release factor 2 (367 aa).

Q254 bears the N5-methylglutamine mark.

Belongs to the prokaryotic/mitochondrial release factor family. Post-translationally, methylated by PrmC. Methylation increases the termination efficiency of RF2.

The protein localises to the cytoplasm. Functionally, peptide chain release factor 2 directs the termination of translation in response to the peptide chain termination codons UGA and UAA. The polypeptide is Peptide chain release factor 2 (Leptospira interrogans serogroup Icterohaemorrhagiae serovar copenhageni (strain Fiocruz L1-130)).